Consider the following 103-residue polypeptide: Alpha-ketoglutarate dehydrogenase component 4 (103 aa).

N-acetylmethionine is present on Met1. An N6-succinyllysine modification is found at Lys5. The interval 20 to 69 (TPLIRFPDRRDNPKPNVSEALRSAGLPSHSSVISQHSKGSKSPDLLMYQG) is disordered. Over residues 47-56 (SHSSVISQHS) the composition is skewed to polar residues. Residues Ser49, Ser61, and Ser90 each carry the phosphoserine modification.

Belongs to the alpha-ketoglutarate dehydrogenase component 4 family. In terms of assembly, component of the 2-oxoglutarate dehydrogenase complex (OGDHC), composed of OGDH (2-oxoglutarate dehydrogenase; also called E1 subunit), DLST (dihydrolipoamide succinyltransferase; also called E2 subunit) and DLD (dihydrolipoamide dehydrogenase; also called E3 subunit), and the assembly factor KGD4. Within OGDHC complex, interacts (via N-terminus) with E3 subunit and (via C-terminus) with E2 subunit.

It is found in the mitochondrion. In terms of biological role, molecular adapter that is necessary to form a stable 2-oxoglutarate dehydrogenase enzyme complex (OGDHC). Enables the specific recruitment of E3 subunit to E2 subunit in the 2-oxoglutarate dehydrogenase complex (OGDHC). The polypeptide is Alpha-ketoglutarate dehydrogenase component 4 (Homo sapiens (Human)).